We begin with the raw amino-acid sequence, 200 residues long: Peptidyl-tRNA hydrolase (200 aa).

Residue tyrosine 15 participates in tRNA binding. The Proton acceptor role is filled by histidine 20. TRNA is bound by residues tyrosine 66, asparagine 68, and asparagine 114.

The protein belongs to the PTH family. As to quaternary structure, monomer.

Its subcellular location is the cytoplasm. The enzyme catalyses an N-acyl-L-alpha-aminoacyl-tRNA + H2O = an N-acyl-L-amino acid + a tRNA + H(+). In terms of biological role, hydrolyzes ribosome-free peptidyl-tRNAs (with 1 or more amino acids incorporated), which drop off the ribosome during protein synthesis, or as a result of ribosome stalling. Functionally, catalyzes the release of premature peptidyl moieties from peptidyl-tRNA molecules trapped in stalled 50S ribosomal subunits, and thus maintains levels of free tRNAs and 50S ribosomes. The protein is Peptidyl-tRNA hydrolase of Paraburkholderia phytofirmans (strain DSM 17436 / LMG 22146 / PsJN) (Burkholderia phytofirmans).